The chain runs to 225 residues: UPF0700 transmembrane protein RA0705 (225 aa).

The next 6 membrane-spanning stretches (helical) occupy residues 17-37 (VGLA…AIGL), 66-86 (GLLL…GVMI), 95-115 (ALLF…QPEL), 117-137 (FVSL…IEGL), 168-188 (IIQI…AVLV), and 194-214 (LALW…FQIP).

It belongs to the UPF0700 family.

The protein localises to the cell membrane. This chain is UPF0700 transmembrane protein RA0705, found in Rhizobium meliloti (strain 1021) (Ensifer meliloti).